The sequence spans 660 residues: tRNA 5-methylaminomethyl-2-thiouridine biosynthesis bifunctional protein MnmC (660 aa).

The tract at residues 1–235 is tRNA (mnm(5)s(2)U34)-methyltransferase; that stretch reads MTITRHARID…KWEVLRGTFI (235 aa). The segment at 266 to 660 is FAD-dependent cmnm(5)s(2)U34 oxidoreductase; the sequence is IGAGLAGCAT…LRGLIRGGGK (395 aa).

This sequence in the N-terminal section; belongs to the methyltransferase superfamily. tRNA (mnm(5)s(2)U34)-methyltransferase family. In the C-terminal section; belongs to the DAO family. FAD is required as a cofactor.

It localises to the cytoplasm. It catalyses the reaction 5-aminomethyl-2-thiouridine(34) in tRNA + S-adenosyl-L-methionine = 5-methylaminomethyl-2-thiouridine(34) in tRNA + S-adenosyl-L-homocysteine + H(+). Functionally, catalyzes the last two steps in the biosynthesis of 5-methylaminomethyl-2-thiouridine (mnm(5)s(2)U) at the wobble position (U34) in tRNA. Catalyzes the FAD-dependent demodification of cmnm(5)s(2)U34 to nm(5)s(2)U34, followed by the transfer of a methyl group from S-adenosyl-L-methionine to nm(5)s(2)U34, to form mnm(5)s(2)U34. The protein is tRNA 5-methylaminomethyl-2-thiouridine biosynthesis bifunctional protein MnmC of Pseudomonas savastanoi pv. phaseolicola (strain 1448A / Race 6) (Pseudomonas syringae pv. phaseolicola (strain 1448A / Race 6)).